A 537-amino-acid chain; its full sequence is Methionine--tRNA ligase (537 aa).

Positions 11 to 21 match the 'HIGH' region motif; it reads AYPNAAPHIGH. The short motif at 301–305 is the 'KMSKS' region element; it reads KMSKS. Lys304 contributes to the ATP binding site. Residues 503-537 are disordered; the sequence is PPPTGVFPRYQPSEIEGADPVKSSSKRREHNKRRE. The span at 526–537 shows a compositional bias: basic residues; it reads SSKRREHNKRRE.

The protein belongs to the class-I aminoacyl-tRNA synthetase family. MetG type 2B subfamily. In terms of assembly, monomer.

The protein localises to the cytoplasm. The catalysed reaction is tRNA(Met) + L-methionine + ATP = L-methionyl-tRNA(Met) + AMP + diphosphate. Its function is as follows. Is required not only for elongation of protein synthesis but also for the initiation of all mRNA translation through initiator tRNA(fMet) aminoacylation. The sequence is that of Methionine--tRNA ligase from Mycobacterium leprae (strain TN).